The primary structure comprises 372 residues: MHNEAPIQRRKSKRIYVGNVPIGDGAPIAVQSMTNTRTTDVEATVNQIKALERVGADIVRVSVPTMDAAEAFRLIKQQVSVPLVADIHFDYRIALKVAEYGVDCLRINPGNIGNEERIRTVVDCARDKNIPIRIGVNAGSLEKDLQEKYGEPTPQALLESAMRHVDHLDRLNFDQFKVSVKASDVFLAVESYRLLAKQIDQPLHLGITEAGGARAGAVKSAIGLGLLLSEGIGDTLRVSLAADPVEEIKVGFDILKSLRIRSRGINFIACPTCSRQEFDVIGTVNALEQRLEDIITPMDVSIIGCVVNGPGEALVSTLGVTGGNKKSGFYEEGVRKDRLDNDDMITQLEARIRAKASMLDESRRISVQQLEK.

The [4Fe-4S] cluster site is built by Cys-270, Cys-273, Cys-305, and Glu-312.

Belongs to the IspG family. It depends on [4Fe-4S] cluster as a cofactor.

It catalyses the reaction (2E)-4-hydroxy-3-methylbut-2-enyl diphosphate + oxidized [flavodoxin] + H2O + 2 H(+) = 2-C-methyl-D-erythritol 2,4-cyclic diphosphate + reduced [flavodoxin]. It participates in isoprenoid biosynthesis; isopentenyl diphosphate biosynthesis via DXP pathway; isopentenyl diphosphate from 1-deoxy-D-xylulose 5-phosphate: step 5/6. Functionally, converts 2C-methyl-D-erythritol 2,4-cyclodiphosphate (ME-2,4cPP) into 1-hydroxy-2-methyl-2-(E)-butenyl 4-diphosphate. The chain is 4-hydroxy-3-methylbut-2-en-1-yl diphosphate synthase (flavodoxin) from Cronobacter sakazakii (strain ATCC BAA-894) (Enterobacter sakazakii).